The following is a 65-amino-acid chain: Adrenergic toxin rho-elapitoxin-Dp1b (65 aa).

Intrachain disulfides connect Cys3/Cys24, Cys17/Cys42, Cys46/Cys57, and Cys58/Cys63.

This sequence belongs to the three-finger toxin family. Short-chain subfamily. Aminergic toxin sub-subfamily. Expressed by the venom gland.

It is found in the secreted. In terms of biological role, highly potent on various alpha-adrenoceptors (ADRA) (subnanomolar affinity for ADRA1A). Order of potency is the following: ADRA1A (Ki=0.37 nM) &gt; ADRA1B (Ki=10.47 nM) &gt; ADRA1D (Ki=104.71 nM) &gt; ADRA2C (Ki=165.96 nM). Were also found to reversibly bind to muscarinic acetylcholine receptors (CHRM), but the affinity is much weaker (CHRM1, Ki=1778.28 nM; CHRM4, Ki=4466.84 nM; CHRM2, Ki=17782.79 nM). This Dendroaspis polylepis polylepis (Black mamba) protein is Adrenergic toxin rho-elapitoxin-Dp1b.